Reading from the N-terminus, the 66-residue chain is Moricin-2 (66 aa).

A signal peptide spans 1 to 24 (MNILKLFFVFIVAMSLVSCSTAAP).

As to expression, expressed in fat body and to a lesser extent in hemocyte and Malpighian tubules.

Its subcellular location is the secreted. Its function is as follows. Has antibacterial activity against Gram-positive and Gram-negative bacteria. Probably acts by disturbing membrane functions with its amphipathic structure. This is Moricin-2 (MOR2) from Bombyx mori (Silk moth).